Here is a 335-residue protein sequence, read N- to C-terminus: Nucleoid-associated protein Pput_1012 (335 aa).

Belongs to the YejK family.

It is found in the cytoplasm. The protein localises to the nucleoid. The polypeptide is Nucleoid-associated protein Pput_1012 (Pseudomonas putida (strain ATCC 700007 / DSM 6899 / JCM 31910 / BCRC 17059 / LMG 24140 / F1)).